We begin with the raw amino-acid sequence, 325 residues long: L-lactate dehydrogenase (325 aa).

Residues Val-19, Asp-40, Lys-45, Tyr-70, and 84 to 85 each bind NAD(+); that span reads GA. Residues Gln-87 and Arg-93 each coordinate substrate. NAD(+) is bound by residues Thr-106, 123-125, and Ser-148; that span reads AAN. 125–128 contributes to the substrate binding site; that stretch reads NPVD. A substrate-binding site is contributed by 153 to 156; sequence DSAR. Residues Arg-158 and His-173 each coordinate beta-D-fructose 1,6-bisphosphate. His-180 serves as the catalytic Proton acceptor. The residue at position 225 (Tyr-225) is a Phosphotyrosine. Substrate is bound at residue Thr-234.

Belongs to the LDH/MDH superfamily. LDH family. As to quaternary structure, homotetramer.

The protein localises to the cytoplasm. The enzyme catalyses (S)-lactate + NAD(+) = pyruvate + NADH + H(+). It participates in fermentation; pyruvate fermentation to lactate; (S)-lactate from pyruvate: step 1/1. Its activity is regulated as follows. Allosterically activated by fructose 1,6-bisphosphate (FBP). Functionally, catalyzes the conversion of lactate to pyruvate. This chain is L-lactate dehydrogenase, found in Latilactobacillus sakei (Lactobacillus sakei).